A 55-amino-acid chain; its full sequence is Large ribosomal subunit protein bL33 (55 aa).

The protein belongs to the bacterial ribosomal protein bL33 family.

The protein is Large ribosomal subunit protein bL33 of Bartonella bacilliformis (strain ATCC 35685 / KC583 / Herrer 020/F12,63).